Consider the following 63-residue polypeptide: Large ribosomal subunit protein bL35 (63 aa).

Positions 26-50 (GSGMRHNLEHKSARKRRALKRDDVL) are disordered.

Belongs to the bacterial ribosomal protein bL35 family.

In Bifidobacterium animalis subsp. lactis (strain AD011), this protein is Large ribosomal subunit protein bL35.